Consider the following 631-residue polypeptide: Probable methyltransferase PMT16 (631 aa).

Over Met-1–Ala-14 the chain is Cytoplasmic. A helical; Signal-anchor for type II membrane protein transmembrane segment spans residues Asn-15–Trp-35. At Gln-36–Ser-631 the chain is on the lumenal side. 3 N-linked (GlcNAc...) asparagine glycosylation sites follow: Asn-61, Asn-230, and Asn-626.

This sequence belongs to the methyltransferase superfamily.

Its subcellular location is the endoplasmic reticulum membrane. The chain is Probable methyltransferase PMT16 from Arabidopsis thaliana (Mouse-ear cress).